A 376-amino-acid polypeptide reads, in one-letter code: Putative F-box protein At1g53370 (376 aa).

In terms of domain architecture, F-box spans 22–71; it reads RNYIDSIPVDLLIDILSRFPPKSIARFYCVSKLWESILRGPDFTELYLTK.

The chain is Putative F-box protein At1g53370 from Arabidopsis thaliana (Mouse-ear cress).